The primary structure comprises 106 residues: Large ribosomal subunit protein uL24 (106 aa).

It belongs to the universal ribosomal protein uL24 family. In terms of assembly, part of the 50S ribosomal subunit.

Its function is as follows. One of two assembly initiator proteins, it binds directly to the 5'-end of the 23S rRNA, where it nucleates assembly of the 50S subunit. In terms of biological role, one of the proteins that surrounds the polypeptide exit tunnel on the outside of the subunit. In Spiroplasma kunkelii, this protein is Large ribosomal subunit protein uL24.